The sequence spans 275 residues: Thioredoxin-like 1-1, chloroplastic (275 aa).

The N-terminal 72 residues, 1 to 72, are a transit peptide targeting the chloroplast; the sequence is MTEVISKTSL…GDSQDESFRR (72 aa). Positions 73 to 206 constitute a Thioredoxin domain; that stretch reads SSAITAQTTL…FRDALAKHGP (134 aa). Catalysis depends on nucleophile residues Cys129 and Cys132. Cys129 and Cys132 are oxidised to a cystine. Residues 238–275 form a disordered region; that stretch reads KPVPVEKEAATPDSNPSLPVPLPSMSSNDEKTLVSAGR. Residues 249–264 show a composition bias toward low complexity; it reads PDSNPSLPVPLPSMSS.

It belongs to the thioredoxin family.

Its subcellular location is the plastid. It localises to the chloroplast. Thiol-disulfide oxidoreductase that may participate in various redox reactions. Possesses insulin disulfide bonds reducing activity. The polypeptide is Thioredoxin-like 1-1, chloroplastic (Arabidopsis thaliana (Mouse-ear cress)).